A 363-amino-acid chain; its full sequence is Membrane-bound lytic murein transglycosylase C (363 aa).

Residues 1–15 (MKKYIVFAIIPFLFA) form the signal peptide. The N-palmitoyl cysteine moiety is linked to residue cysteine 16. A lipid anchor (S-diacylglycerol cysteine) is attached at cysteine 16.

It belongs to the transglycosylase Slt family.

The protein resides in the cell outer membrane. The catalysed reaction is Exolytic cleavage of the (1-&gt;4)-beta-glycosidic linkage between N-acetylmuramic acid (MurNAc) and N-acetylglucosamine (GlcNAc) residues in peptidoglycan, from either the reducing or the non-reducing ends of the peptidoglycan chains, with concomitant formation of a 1,6-anhydrobond in the MurNAc residue.. Murein-degrading enzyme. May play a role in recycling of muropeptides during cell elongation and/or cell division. This is Membrane-bound lytic murein transglycosylase C from Histophilus somni (strain 129Pt) (Haemophilus somnus).